Here is a 270-residue protein sequence, read N- to C-terminus: Formamidopyrimidine-DNA glycosylase (270 aa).

Pro2 (schiff-base intermediate with DNA) is an active-site residue. Residue Glu3 is the Proton donor of the active site. Lys58 (proton donor; for beta-elimination activity) is an active-site residue. Residues His91, Arg110, and Arg151 each contribute to the DNA site. The FPG-type zinc finger occupies 236 to 270 (RVYDREDAPCRRCATPIRRIVQAQRASFYCPTCQR). Arg260 (proton donor; for delta-elimination activity) is an active-site residue.

The protein belongs to the FPG family. Monomer. Requires Zn(2+) as cofactor.

The enzyme catalyses Hydrolysis of DNA containing ring-opened 7-methylguanine residues, releasing 2,6-diamino-4-hydroxy-5-(N-methyl)formamidopyrimidine.. It carries out the reaction 2'-deoxyribonucleotide-(2'-deoxyribose 5'-phosphate)-2'-deoxyribonucleotide-DNA = a 3'-end 2'-deoxyribonucleotide-(2,3-dehydro-2,3-deoxyribose 5'-phosphate)-DNA + a 5'-end 5'-phospho-2'-deoxyribonucleoside-DNA + H(+). Functionally, involved in base excision repair of DNA damaged by oxidation or by mutagenic agents. Acts as a DNA glycosylase that recognizes and removes damaged bases. Has a preference for oxidized purines, such as 7,8-dihydro-8-oxoguanine (8-oxoG). Has AP (apurinic/apyrimidinic) lyase activity and introduces nicks in the DNA strand. Cleaves the DNA backbone by beta-delta elimination to generate a single-strand break at the site of the removed base with both 3'- and 5'-phosphates. This chain is Formamidopyrimidine-DNA glycosylase, found in Thiobacillus denitrificans (strain ATCC 25259 / T1).